The primary structure comprises 192 residues: Nucleosome assembly protein 1-like 5 (192 aa).

Polar residues predominate over residues 1–12; that stretch reads MADSQNQGSAEP. Residues 1–76 form a disordered region; it reads MADSQNQGSA…APKPRNDFIE (76 aa). Low complexity-rich tracts occupy residues 15–28 and 40–55; these read AAAA…AAAA and GDSD…VVGQ. Positions 86-112 form a coiled coil; the sequence is VLALKKLQKRCDKIEAKFDKEFQALEK. The disordered stretch occupies residues 136–192; it reads AWTLEGDEEDDDDDEYEDEEEGEEEDEEEEEPAAEAAGTAAAKDEGPHSAVPDDAKK. Residues 140–168 show a composition bias toward acidic residues; the sequence is EGDEEDDDDDEYEDEEEGEEEDEEEEEPA. Residues 177 to 192 are compositionally biased toward basic and acidic residues; that stretch reads AKDEGPHSAVPDDAKK.

The protein belongs to the nucleosome assembly protein (NAP) family.

The protein resides in the nucleus. The sequence is that of Nucleosome assembly protein 1-like 5 (NAP1L5) from Bos taurus (Bovine).